Reading from the N-terminus, the 158-residue chain is S-ribosylhomocysteine lyase (158 aa).

3 residues coordinate Fe cation: H54, H58, and C124.

Belongs to the LuxS family. In terms of assembly, homodimer. Requires Fe cation as cofactor.

The enzyme catalyses S-(5-deoxy-D-ribos-5-yl)-L-homocysteine = (S)-4,5-dihydroxypentane-2,3-dione + L-homocysteine. Involved in the synthesis of autoinducer 2 (AI-2) which is secreted by bacteria and is used to communicate both the cell density and the metabolic potential of the environment. The regulation of gene expression in response to changes in cell density is called quorum sensing. Catalyzes the transformation of S-ribosylhomocysteine (RHC) to homocysteine (HC) and 4,5-dihydroxy-2,3-pentadione (DPD). This chain is S-ribosylhomocysteine lyase, found in Lactobacillus johnsonii (strain CNCM I-12250 / La1 / NCC 533).